A 201-amino-acid polypeptide reads, in one-letter code: Ras-related protein Rab-5A (201 aa).

Residues 16 to 24, 35 to 41, 64 to 68, 122 to 125, and 152 to 154 each bind GTP; these read GEAAVGKSS, LDYQEST, DTAGQ, NKLD, and SAK. Residues 38–46 carry the Effector region motif; sequence QESTIGAAF. 2 S-geranylgeranyl cysteine lipidation sites follow: cysteine 199 and cysteine 200.

The protein belongs to the small GTPase superfamily. Rab family.

The protein localises to the cell membrane. The protein resides in the endosome membrane. With respect to regulation, regulated by guanine nucleotide exchange factors (GEFs) which promote the exchange of bound GDP for free GTP. Functionally, required for the fusion of plasma membranes and early endosomes. The sequence is that of Ras-related protein Rab-5A (rab5A) from Dictyostelium discoideum (Social amoeba).